Reading from the N-terminus, the 350-residue chain is Heat-inducible transcription repressor HrcA (350 aa).

It belongs to the HrcA family.

In terms of biological role, negative regulator of class I heat shock genes (grpE-dnaK-dnaJ and groELS operons). Prevents heat-shock induction of these operons. This chain is Heat-inducible transcription repressor HrcA, found in Methylococcus capsulatus (strain ATCC 33009 / NCIMB 11132 / Bath).